We begin with the raw amino-acid sequence, 690 residues long: Eukaryotic translation initiation factor 3 subunit B (690 aa).

Residues 1–11 are compositionally biased toward basic and acidic residues; it reads MAKKKSEEHSG. The disordered stretch occupies residues 1 to 36; the sequence is MAKKKSEEHSGADANDSDYQEEPNFEDPPGFVDNIS. Positions 15–25 are enriched in acidic residues; that stretch reads NDSDYQEEPNF. An RRM domain is found at 57–141; sequence SVVVVDNIPK…HTFAVNLFTD (85 aa). WD repeat units follow at residues 207–246, 293–331, 334–369, 442–484, and 530–575; these read TRER…KIQK, DGMS…LLDL, IKIP…TLME, EIRE…KPSL, and PDHF…IKRT. Residues 595–645 are a coiled coil; it reads EEKQKEIKKNLKKYYAAFEQKDRLRLTRASKELLEKRSQLRETFMEYRNKR.

Belongs to the eIF-3 subunit B family. Component of the eukaryotic translation initiation factor 3 (eIF-3) complex. The eIF-3 complex interacts with pix. Interacts with mxt.

The protein localises to the cytoplasm. In terms of biological role, RNA-binding component of the eukaryotic translation initiation factor 3 (eIF-3) complex, which is involved in protein synthesis of a specialized repertoire of mRNAs and, together with other initiation factors, stimulates binding of mRNA and methionyl-tRNAi to the 40S ribosome. The eIF-3 complex specifically targets and initiates translation of a subset of mRNAs involved in cell proliferation. This is Eukaryotic translation initiation factor 3 subunit B from Drosophila yakuba (Fruit fly).